Here is a 244-residue protein sequence, read N- to C-terminus: Meiotic drive suppressor wtf2 (244 aa).

Polar residues predominate over residues 1–10 (MKNNYTSLKS). The segment at 1-68 (MKNNYTSLKS…RENNPSRSTD (68 aa)) is disordered. Basic and acidic residues predominate over residues 17–30 (ELKTDHEIDLEKGP). Transmembrane regions (helical) follow at residues 73 to 93 (FLIK…LAIC), 110 to 130 (WTLF…LTYF), 149 to 169 (WENM…VGSP), and 183 to 203 (LKWS…VFIA).

The protein belongs to the WTF family. As to quaternary structure, homomer. Interacts with other proteins that exhibit high sequence similarity.

It is found in the spore membrane. It localises to the vacuole membrane. Its function is as follows. Acts as a suppressor component of the dual wtf meiotic drive system, and can suppress but not confer meiotic drive by compatible poisons. Wtf meiotic drive systems promote unequal transmission of alleles from the parental zygote to progeny spores by encoding a poison and an antidote from the same locus; the poison is trans-acting and forms toxic aggregates in all spores within an ascus, wherease the antidote is spore-specific and targets aggregates for degradation by the vacuole. Meiotic drive by wtf systems therefore lead to poisoning of all progeny that do not inherit the dual poison/antidote allele, or express a compatible antidote. The polypeptide is Meiotic drive suppressor wtf2 (Schizosaccharomyces kambucha (Fission yeast)).